The sequence spans 150 residues: Probable deoxyuridine 5'-triphosphate nucleotidohydrolase (150 aa).

This sequence belongs to the dCTP deaminase family. Archaeal dUTPase subfamily.

It catalyses the reaction dUTP + H2O = dUMP + diphosphate + H(+). The protein operates within pyrimidine metabolism; dUMP biosynthesis; dUMP from dCTP (dUTP route): step 2/2. Its function is as follows. This enzyme is involved in nucleotide metabolism: it produces dUMP, the immediate precursor of thymidine nucleotides and it decreases the intracellular concentration of dUTP so that uracil cannot be incorporated into DNA. This is Probable deoxyuridine 5'-triphosphate nucleotidohydrolase from Methanothermobacter thermautotrophicus (strain ATCC 29096 / DSM 1053 / JCM 10044 / NBRC 100330 / Delta H) (Methanobacterium thermoautotrophicum).